Here is a 257-residue protein sequence, read N- to C-terminus: Movement protein (257 aa).

The disordered stretch occupies residues 212 to 257 (NQSKKGSNKYVGKRNDNKGLNKEGKLFDKVRIGQNSESSDAESSSF). Basic and acidic residues predominate over residues 224-242 (KRNDNKGLNKEGKLFDKVR). Residues 247–257 (SESSDAESSSF) show a composition bias toward low complexity.

This sequence belongs to the tobamovirus movement protein family.

It localises to the host cytoplasm. It is found in the host cytoskeleton. Its subcellular location is the host cell junction. The protein resides in the host plasmodesma. In terms of biological role, transports viral genome to neighboring plant cells directly through plasmosdesmata, without any budding. The movement protein allows efficient cell to cell propagation, by bypassing the host cell wall barrier. Forms a ribonucleoprotein complex with viral RNA. Binds microtubules and modulates microtubule stability. Can bind double-stranded DNA. In Pepper mild mottle virus (strain Spain) (PMMV-S), this protein is Movement protein (MP).